The primary structure comprises 108 residues: Small ribosomal subunit protein uS10 (108 aa).

Belongs to the universal ribosomal protein uS10 family. Part of the 30S ribosomal subunit.

Its function is as follows. Involved in the binding of tRNA to the ribosomes. The chain is Small ribosomal subunit protein uS10 from Ehrlichia canis (strain Jake).